We begin with the raw amino-acid sequence, 428 residues long: Probable mannosyltransferase YUR1 (428 aa).

The Cytoplasmic portion of the chain corresponds to 1 to 3 (MAK). A helical; Signal-anchor for type II membrane protein membrane pass occupies residues 4-24 (GGSLYIVGIFLPIWTFMIYIF). The stem region stretch occupies residues 25–88 (GKELFLIRKY…TRQNDSDSFH (64 aa)). At 25 to 428 (GKELFLIRKY…YFLKEEQDEI (404 aa)) the chain is on the lumenal side. Asn77, Asn82, Asn92, and Asn167 each carry an N-linked (GlcNAc...) asparagine glycan. A catalytic region spans residues 89-428 (LRENATILML…YFLKEEQDEI (340 aa)). Glu313 acts as the Nucleophile in catalysis. Asn414 is a glycosylation site (N-linked (GlcNAc...) asparagine).

It belongs to the glycosyltransferase 15 family.

It localises to the golgi apparatus membrane. It participates in protein modification; protein glycosylation. Functionally, possible glycosyltransferase involved in N-linked glycosylation. Transfers an alpha-D-mannosyl residue from GDP-mannose into lipid-linked oligosaccharide, forming an alpha-(1-&gt;2)-D-mannosyl-D-mannose linkage. In Saccharomyces cerevisiae (strain ATCC 204508 / S288c) (Baker's yeast), this protein is Probable mannosyltransferase YUR1 (YUR1).